The primary structure comprises 404 residues: Schlafen-like protein 1 (404 aa).

Disordered stretches follow at residues 1–31 (MTPM…LPTE) and 139–170 (GPLS…AWPT). The segment covering 7–16 (SVQTQVSEPF) has biased composition (polar residues). Over residues 152 to 165 (GLSPGPNPGSGVPL) the composition is skewed to low complexity. Position 258 to 265 (258 to 265 (GVEDSGLV)) interacts with ATP. Residues 365–395 (RWLVELGKLEERVKVLTMEKEQLQQQLQQHG) are a coiled coil.

It belongs to the Schlafen family. Subgroup I subfamily.

This is Schlafen-like protein 1 (SLFNL1) from Macaca fascicularis (Crab-eating macaque).